Reading from the N-terminus, the 407-residue chain is Imidazolonepropionase (407 aa).

Residues His-74 and His-76 each coordinate Fe(3+). Positions 74 and 76 each coordinate Zn(2+). 4-imidazolone-5-propanoate contacts are provided by Arg-83, Tyr-146, and His-179. Tyr-146 is an N-formimidoyl-L-glutamate binding site. Residue His-244 participates in Fe(3+) binding. Residue His-244 participates in Zn(2+) binding. 4-imidazolone-5-propanoate is bound at residue Gln-247. Asp-319 serves as a coordination point for Fe(3+). Asp-319 contacts Zn(2+). Asn-321 and Gly-323 together coordinate N-formimidoyl-L-glutamate. Thr-324 serves as a coordination point for 4-imidazolone-5-propanoate.

The protein belongs to the metallo-dependent hydrolases superfamily. HutI family. The cofactor is Zn(2+). Fe(3+) is required as a cofactor.

It localises to the cytoplasm. The catalysed reaction is 4-imidazolone-5-propanoate + H2O = N-formimidoyl-L-glutamate. It participates in amino-acid degradation; L-histidine degradation into L-glutamate; N-formimidoyl-L-glutamate from L-histidine: step 3/3. Catalyzes the hydrolytic cleavage of the carbon-nitrogen bond in imidazolone-5-propanoate to yield N-formimidoyl-L-glutamate. It is the third step in the universal histidine degradation pathway. The polypeptide is Imidazolonepropionase (Salmonella arizonae (strain ATCC BAA-731 / CDC346-86 / RSK2980)).